Consider the following 617-residue polypeptide: Protein fem-1 homolog C (617 aa).

Methionine 1 carries the post-translational modification N-acetylmethionine. ANK repeat units follow at residues 2-31 (DLKT…KAEV), 40-70 (NGAT…SIEV), 82-111 (EGAP…SVNN), 115-144 (TNST…DLEV), 148-177 (HGHT…DVNR), 181-210 (KGNT…KMEK), and 213-242 (YGMT…TSKT). 2 TPR repeats span residues 245–279 (INAL…RYSD) and 338–371 (SYYI…QQSN). 2 ANK repeats span residues 481–523 (NNFS…DVNV) and 527–556 (DDNS…HFDA).

It belongs to the fem-1 family. Component of a Cul2-RING (CRL2) E3 ubiquitin-protein ligase complex, also named ECS (Elongin BC-CUL2/5-SOCS-box protein) complex, composed of CUL2, Elongin BC (ELOB and ELOC), RBX1 and substrate-specific adapter FEM1C. In terms of tissue distribution, widely expressed. Expressed at higher level in testis.

It participates in protein modification; protein ubiquitination. Substrate-recognition component of a Cul2-RING (CRL2) E3 ubiquitin-protein ligase complex of the DesCEND (destruction via C-end degrons) pathway, which recognizes a C-degron located at the extreme C terminus of target proteins, leading to their ubiquitination and degradation. The C-degron recognized by the DesCEND pathway is usually a motif of less than ten residues and can be present in full-length proteins, truncated proteins or proteolytically cleaved forms. The CRL2(FEM1C) complex specifically recognizes proteins with an arginine at the C-terminus: recognizes and binds proteins ending with -Lys/Arg-Xaa-Arg and -Lys/Arg-Xaa-Xaa-Arg C-degrons, such as SIL1 or OR51B2, leading to their ubiquitination and degradation. The CRL2(FEM1C) complex mediates ubiquitination and degradation of truncated MSRB1/SEPX1 selenoproteins produced by failed UGA/Sec decoding. Promotes ubiquitination and degradation of SLBP. The polypeptide is Protein fem-1 homolog C (Mus musculus (Mouse)).